The following is a 202-amino-acid chain: Protein EMBRYO DEFECTIVE 514 (202 aa).

Disordered stretches follow at residues 1-69 and 168-202; these read MAEE…PVKL and MKTP…RFRR. At A2 the chain carries N-acetylalanine. Basic and acidic residues-rich tracts occupy residues 33-42 and 51-65; these read ETGDEKRERE and GESK…EKSG. Positions 174 to 202 are enriched in gly residues; it reads NGNGHGGGRGGGGGRRGGRGGGRGGRFRR.

As to expression, expressed in leaves, flowers and embryos at globular stage.

The protein localises to the nucleus. Functionally, may play a role in ribosome biogenesis and in determining the rate of cell division. Involved in a process essential for nuclear and nucleolar functions. This is Protein EMBRYO DEFECTIVE 514 from Arabidopsis thaliana (Mouse-ear cress).